The primary structure comprises 374 residues: dTDP-3-amino-3,4,6-trideoxy-alpha-D-glucose transaminase (374 aa).

Residues glycine 60, glutamine 160, 181-186 (SFYPTK), tyrosine 214, tyrosine 221, 229-231 (NSR), and tyrosine 316 contribute to the pyridoxal 5'-phosphate site. Lysine 186 is modified (N6-(pyridoxal phosphate)lysine).

The protein belongs to the degT/dnrJ/eryC1 family. The cofactor is pyridoxal 5'-phosphate.

It catalyses the reaction dTDP-3-amino-3,4,6-trideoxy-alpha-D-glucose + 2-oxoglutarate = dTDP-3-dehydro-4,6-dideoxy-alpha-D-glucose + L-glutamate. It functions in the pathway antibiotic biosynthesis. Functionally, involved in the biosynthesis of the amino sugar dTDP-L-megosamine which is found in the macrolide antibiotic and antiparasitic megalomicin A. Catalyzes the reversible transfer of the amino group from L-glutamate to the C-3 position of dTDP-3-keto-4,6-deoxyglucose to yield dTDP-3-amino-3,4,6-trideoxyglucose. The chain is dTDP-3-amino-3,4,6-trideoxy-alpha-D-glucose transaminase from Micromonospora megalomicea subsp. nigra.